We begin with the raw amino-acid sequence, 34 residues long: Cuticle protein 9 (34 aa).

This chain is Cuticle protein 9, found in Blaberus craniifer (Death's head cockroach).